The chain runs to 1078 residues: Disheveled-associated activator of morphogenesis 1 (1078 aa).

Ser34 is modified (phosphoserine). The region spanning 45-420 (LPMPPVEELD…QIVIQNDKGQ (376 aa)) is the GBD/FH3 domain. Positions 437-526 (RMLVNENEVK…ELSRRAVCAS (90 aa)) form a coiled coil. 2 disordered regions span residues 456-480 (RKEH…TQEK) and 524-585 (CASI…PLGA). In terms of domain architecture, FH1 spans 528–599 (PGGPSPGAPG…PGAPMGLALK (72 aa)). 2 stretches are compositionally biased toward pro residues: residues 530–539 (GPSPGAPGGP) and 548–585 (LLPP…PLGA). The FH2 domain occupies 600-1009 (KKSIPQPTNA…EERRARMEAQ (410 aa)). The interval 693–702 (AQNCNILLSR) is actin-binding. Basic and acidic residues predominate over residues 987–1027 (KQENENMRKKKEEEERRARMEAQLKEQRERERKMRKAKENS). 2 disordered regions span residues 987 to 1034 (KQEN…GEFD) and 1055 to 1078 (RNRK…KLNF). Phosphoserine is present on residues Ser1027 and Ser1030. The region spanning 1027 to 1058 (SEESGEFDDLVSALRSGEVFDKDLSKLKRNRK) is the DAD domain. Basic and acidic residues predominate over residues 1067–1078 (SSRERPITKLNF).

The protein belongs to the formin homology family. In terms of assembly, homodimer. Interacts with CIP4, FNBP1 and FNBP1L. Interacts with the SH3 domains of Abl, BTK, endophilin, spectrin and SRC. Binds specifically to GTP-bound CDC42 and RHOA. Interacts with INTU; INTU mediates the indirect interaction between DAAM1 and NPHP4. Interacts (via coiled coil domain) with KANK1 (via coiled coil domain). In terms of tissue distribution, expressed in all tissues examined.

The protein localises to the cytoplasm. It is found in the cytoskeleton. It localises to the cilium basal body. Binds to disheveled (Dvl) and Rho, and mediates Wnt-induced Dvl-Rho complex formation. May play a role as a scaffolding protein to recruit Rho-GDP and Rho-GEF, thereby enhancing Rho-GTP formation. Can direct nucleation and elongation of new actin filaments. Involved in building functional cilia. Involved in the organization of the subapical actin network in multiciliated epithelial cells. Together with DAAM2, required for myocardial maturation and sarcomere assembly. During cell division, may regulate RHOA activation that signals spindle orientation and chromosomal segregation. The protein is Disheveled-associated activator of morphogenesis 1 (DAAM1) of Homo sapiens (Human).